The chain runs to 265 residues: Zinc transporter ZupT (265 aa).

The next 8 helical transmembrane spans lie at 6–26, 37–57, 77–97, 122–142, 150–170, 184–204, 208–228, and 245–265; these read IAFA…GGAL, FMAA…FMEI, WTMM…DRLV, GMFT…ATFL, IAIP…IAVA, FWWA…GFAL, FIGP…MVFI, and CAIY…ALFI. Positions 133 and 136 each coordinate Fe(2+). Positions 136 and 161 each coordinate Zn(2+). Fe(2+)-binding residues include Asn162, Glu165, and Glu194. Glu165 is a binding site for Zn(2+).

This sequence belongs to the ZIP transporter (TC 2.A.5) family. ZupT subfamily.

The protein localises to the cell membrane. It catalyses the reaction Zn(2+)(in) = Zn(2+)(out). Functionally, mediates zinc uptake. May also transport other divalent cations. The chain is Zinc transporter ZupT from Corynebacterium aurimucosum (strain ATCC 700975 / DSM 44827 / CIP 107346 / CN-1) (Corynebacterium nigricans).